The chain runs to 118 residues: uncharacterized protein (118 aa).

The signal sequence occupies residues 1-22 (MKMSYLRSGIVGFLAGASLSYA). The stretch at 41–71 (TATEALETDKQLYKKIEKKIEELESSCVKKS) forms a coiled coil.

This is an uncharacterized protein from Schizosaccharomyces pombe (strain 972 / ATCC 24843) (Fission yeast).